We begin with the raw amino-acid sequence, 346 residues long: CLOCK-interacting pacemaker (346 aa).

Residues 1–42 show a composition bias toward basic and acidic residues; that stretch reads MEKNQKCATEQERFKARSGHGDGQRAEPRKTQTTTESDKDSG. Disordered stretches follow at residues 1 to 83 and 167 to 228; these read MEKN…SQPQ and CARK…KELD. Positions 50 to 68 are enriched in polar residues; that stretch reads CLSSVEQTDTEEGPTTSRW. The span at 179–192 shows a compositional bias: basic residues; that stretch reads NQTKRQCSKGHSGS. Residues 205 to 222 are compositionally biased toward polar residues; the sequence is GVQQGPVDQNVKESSVSA. The stretch at 283-315 forms a coiled coil; sequence MKTKELARHNQATQSQLEKLQEQVQLYATAMSS.

It is found in the nucleus. The protein resides in the cytoplasm. It localises to the cytosol. Functionally, transcriptional repressor which acts as a negative-feedback regulator of CLOCK-BMAL1 transcriptional activity in the circadian-clock mechanism. The physiological relevance of these observations is unsure. This Xenopus laevis (African clawed frog) protein is CLOCK-interacting pacemaker (cipc).